The primary structure comprises 465 residues: Siroheme synthase (465 aa).

The tract at residues 1 to 203 is precorrin-2 dehydrogenase /sirohydrochlorin ferrochelatase; the sequence is MDFLPLFHSL…GRPAEAERLL (203 aa). NAD(+) is bound by residues 22 to 23 and 43 to 44; these read EV and PQ. Position 128 is a phosphoserine (serine 128). The interval 217 to 465 is uroporphyrinogen-III C-methyltransferase; it reads GEVYLVGAGP…AWFEGAREDA (249 aa). Proline 226 is an S-adenosyl-L-methionine binding site. Aspartate 249 serves as the catalytic Proton acceptor. Lysine 271 acts as the Proton donor in catalysis. S-adenosyl-L-methionine is bound by residues 302–304, isoleucine 307, 332–333, methionine 384, and glycine 413; these read GGD and TA.

It in the N-terminal section; belongs to the precorrin-2 dehydrogenase / sirohydrochlorin ferrochelatase family. The protein in the C-terminal section; belongs to the precorrin methyltransferase family.

The catalysed reaction is uroporphyrinogen III + 2 S-adenosyl-L-methionine = precorrin-2 + 2 S-adenosyl-L-homocysteine + H(+). The enzyme catalyses precorrin-2 + NAD(+) = sirohydrochlorin + NADH + 2 H(+). It catalyses the reaction siroheme + 2 H(+) = sirohydrochlorin + Fe(2+). Its pathway is cofactor biosynthesis; adenosylcobalamin biosynthesis; precorrin-2 from uroporphyrinogen III: step 1/1. It functions in the pathway cofactor biosynthesis; adenosylcobalamin biosynthesis; sirohydrochlorin from precorrin-2: step 1/1. The protein operates within porphyrin-containing compound metabolism; siroheme biosynthesis; precorrin-2 from uroporphyrinogen III: step 1/1. It participates in porphyrin-containing compound metabolism; siroheme biosynthesis; siroheme from sirohydrochlorin: step 1/1. Its pathway is porphyrin-containing compound metabolism; siroheme biosynthesis; sirohydrochlorin from precorrin-2: step 1/1. Its function is as follows. Multifunctional enzyme that catalyzes the SAM-dependent methylations of uroporphyrinogen III at position C-2 and C-7 to form precorrin-2 via precorrin-1. Then it catalyzes the NAD-dependent ring dehydrogenation of precorrin-2 to yield sirohydrochlorin. Finally, it catalyzes the ferrochelation of sirohydrochlorin to yield siroheme. In Pseudomonas aeruginosa (strain UCBPP-PA14), this protein is Siroheme synthase.